The sequence spans 274 residues: Small ribosomal subunit protein uS2 (274 aa).

A disordered region spans residues alanine 255 to glutamate 274.

Belongs to the universal ribosomal protein uS2 family.

The sequence is that of Small ribosomal subunit protein uS2 from Gloeobacter violaceus (strain ATCC 29082 / PCC 7421).